A 433-amino-acid polypeptide reads, in one-letter code: 3-phosphoshikimate 1-carboxyvinyltransferase (433 aa).

3 residues coordinate 3-phosphoshikimate: lysine 22, serine 23, and arginine 27. Residue lysine 22 participates in phosphoenolpyruvate binding. Phosphoenolpyruvate contacts are provided by glycine 95 and arginine 123. 3-phosphoshikimate-binding residues include serine 167, glutamine 169, aspartate 315, and lysine 342. Glutamine 169 contributes to the phosphoenolpyruvate binding site. Catalysis depends on aspartate 315, which acts as the Proton acceptor. The phosphoenolpyruvate site is built by arginine 346 and arginine 387.

It belongs to the EPSP synthase family. As to quaternary structure, monomer.

The protein localises to the cytoplasm. The enzyme catalyses 3-phosphoshikimate + phosphoenolpyruvate = 5-O-(1-carboxyvinyl)-3-phosphoshikimate + phosphate. Its pathway is metabolic intermediate biosynthesis; chorismate biosynthesis; chorismate from D-erythrose 4-phosphate and phosphoenolpyruvate: step 6/7. Its function is as follows. Catalyzes the transfer of the enolpyruvyl moiety of phosphoenolpyruvate (PEP) to the 5-hydroxyl of shikimate-3-phosphate (S3P) to produce enolpyruvyl shikimate-3-phosphate and inorganic phosphate. This Legionella pneumophila subsp. pneumophila (strain Philadelphia 1 / ATCC 33152 / DSM 7513) protein is 3-phosphoshikimate 1-carboxyvinyltransferase.